We begin with the raw amino-acid sequence, 151 residues long: Small ribosomal subunit protein uS15y (151 aa).

It belongs to the universal ribosomal protein uS15 family.

The sequence is that of Small ribosomal subunit protein uS15y from Oryza sativa subsp. japonica (Rice).